The sequence spans 126 residues: Glycine cleavage system H protein (126 aa).

The Lipoyl-binding domain maps to 22–104; that stretch reads VATIGITEYA…YEKAWMVKVE (83 aa). Lysine 63 carries the post-translational modification N6-lipoyllysine.

This sequence belongs to the GcvH family. In terms of assembly, the glycine cleavage system is composed of four proteins: P, T, L and H. Requires (R)-lipoate as cofactor.

Its function is as follows. The glycine cleavage system catalyzes the degradation of glycine. The H protein shuttles the methylamine group of glycine from the P protein to the T protein. Is also involved in protein lipoylation via its role as an octanoyl/lipoyl carrier protein intermediate. The chain is Glycine cleavage system H protein from Staphylococcus aureus (strain JH1).